A 460-amino-acid chain; its full sequence is 3-isopropylmalate dehydratase large subunit (460 aa).

Residues cysteine 338, cysteine 398, and cysteine 401 each contribute to the [4Fe-4S] cluster site.

Belongs to the aconitase/IPM isomerase family. LeuC type 1 subfamily. In terms of assembly, heterodimer of LeuC and LeuD. It depends on [4Fe-4S] cluster as a cofactor.

The enzyme catalyses (2R,3S)-3-isopropylmalate = (2S)-2-isopropylmalate. It functions in the pathway amino-acid biosynthesis; L-leucine biosynthesis; L-leucine from 3-methyl-2-oxobutanoate: step 2/4. Its function is as follows. Catalyzes the isomerization between 2-isopropylmalate and 3-isopropylmalate, via the formation of 2-isopropylmaleate. The polypeptide is 3-isopropylmalate dehydratase large subunit (Streptococcus sanguinis (strain SK36)).